A 509-amino-acid chain; its full sequence is Maturase K (509 aa).

The protein belongs to the intron maturase 2 family. MatK subfamily.

The protein localises to the plastid. Its subcellular location is the chloroplast. Usually encoded in the trnK tRNA gene intron. Probably assists in splicing its own and other chloroplast group II introns. The sequence is that of Maturase K from Opuntia quimilo (Cactus).